Here is a 561-residue protein sequence, read N- to C-terminus: Proline--tRNA ligase (561 aa).

The protein belongs to the class-II aminoacyl-tRNA synthetase family. ProS type 1 subfamily. In terms of assembly, homodimer.

The protein resides in the cytoplasm. The enzyme catalyses tRNA(Pro) + L-proline + ATP = L-prolyl-tRNA(Pro) + AMP + diphosphate. Functionally, catalyzes the attachment of proline to tRNA(Pro) in a two-step reaction: proline is first activated by ATP to form Pro-AMP and then transferred to the acceptor end of tRNA(Pro). As ProRS can inadvertently accommodate and process non-cognate amino acids such as alanine and cysteine, to avoid such errors it has two additional distinct editing activities against alanine. One activity is designated as 'pretransfer' editing and involves the tRNA(Pro)-independent hydrolysis of activated Ala-AMP. The other activity is designated 'posttransfer' editing and involves deacylation of mischarged Ala-tRNA(Pro). The misacylated Cys-tRNA(Pro) is not edited by ProRS. The protein is Proline--tRNA ligase of Wigglesworthia glossinidia brevipalpis.